Reading from the N-terminus, the 145-residue chain is Large ribosomal subunit protein uL15 (145 aa).

The disordered stretch occupies residues I23–E51. Positions G32–R47 are enriched in basic residues.

It belongs to the universal ribosomal protein uL15 family. As to quaternary structure, part of the 50S ribosomal subunit.

In terms of biological role, binds to the 23S rRNA. This is Large ribosomal subunit protein uL15 from Buchnera aphidicola subsp. Cinara cedri (strain Cc).